The following is a 475-amino-acid chain: Protein nucleotidyltransferase YdiU (475 aa).

Residues Gly-82, Gly-84, Arg-85, Lys-105, Asp-117, Gly-118, Arg-168, and Arg-175 each contribute to the ATP site. Catalysis depends on Asp-240, which acts as the Proton acceptor. Residues Asn-241 and Asp-250 each coordinate Mg(2+). Asp-250 lines the ATP pocket.

This sequence belongs to the SELO family. Requires Mg(2+) as cofactor. It depends on Mn(2+) as a cofactor.

It catalyses the reaction L-seryl-[protein] + ATP = 3-O-(5'-adenylyl)-L-seryl-[protein] + diphosphate. The enzyme catalyses L-threonyl-[protein] + ATP = 3-O-(5'-adenylyl)-L-threonyl-[protein] + diphosphate. It carries out the reaction L-tyrosyl-[protein] + ATP = O-(5'-adenylyl)-L-tyrosyl-[protein] + diphosphate. The catalysed reaction is L-histidyl-[protein] + UTP = N(tele)-(5'-uridylyl)-L-histidyl-[protein] + diphosphate. It catalyses the reaction L-seryl-[protein] + UTP = O-(5'-uridylyl)-L-seryl-[protein] + diphosphate. The enzyme catalyses L-tyrosyl-[protein] + UTP = O-(5'-uridylyl)-L-tyrosyl-[protein] + diphosphate. Functionally, nucleotidyltransferase involved in the post-translational modification of proteins. It can catalyze the addition of adenosine monophosphate (AMP) or uridine monophosphate (UMP) to a protein, resulting in modifications known as AMPylation and UMPylation. The sequence is that of Protein nucleotidyltransferase YdiU from Aeromonas hydrophila subsp. hydrophila (strain ATCC 7966 / DSM 30187 / BCRC 13018 / CCUG 14551 / JCM 1027 / KCTC 2358 / NCIMB 9240 / NCTC 8049).